Here is a 468-residue protein sequence, read N- to C-terminus: ATP synthase subunit beta (468 aa).

Residue 150-157 (GGAGVGKT) participates in ATP binding.

It belongs to the ATPase alpha/beta chains family. F-type ATPases have 2 components, CF(1) - the catalytic core - and CF(0) - the membrane proton channel. CF(1) has five subunits: alpha(3), beta(3), gamma(1), delta(1), epsilon(1). CF(0) has three main subunits: a(1), b(2) and c(9-12). The alpha and beta chains form an alternating ring which encloses part of the gamma chain. CF(1) is attached to CF(0) by a central stalk formed by the gamma and epsilon chains, while a peripheral stalk is formed by the delta and b chains.

It is found in the cell inner membrane. It catalyses the reaction ATP + H2O + 4 H(+)(in) = ADP + phosphate + 5 H(+)(out). Produces ATP from ADP in the presence of a proton gradient across the membrane. The catalytic sites are hosted primarily by the beta subunits. The chain is ATP synthase subunit beta from Acidovorax ebreus (strain TPSY) (Diaphorobacter sp. (strain TPSY)).